A 486-amino-acid polypeptide reads, in one-letter code: Chromosomal replication initiator protein DnaA (486 aa).

The tract at residues Met1–Thr79 is domain I, interacts with DnaA modulators. The interval Thr79–Pro141 is domain II. The domain III, AAA+ region stretch occupies residues Phe142 to Ile358. Positions 186, 188, 189, and 190 each coordinate ATP. Positions Asp359–Asn486 are domain IV, binds dsDNA.

This sequence belongs to the DnaA family. Oligomerizes as a right-handed, spiral filament on DNA at oriC.

The protein resides in the cytoplasm. In terms of biological role, plays an essential role in the initiation and regulation of chromosomal replication. ATP-DnaA binds to the origin of replication (oriC) to initiate formation of the DNA replication initiation complex once per cell cycle. Binds the DnaA box (a 9 base pair repeat at the origin) and separates the double-stranded (ds)DNA. Forms a right-handed helical filament on oriC DNA; dsDNA binds to the exterior of the filament while single-stranded (ss)DNA is stabiized in the filament's interior. The ATP-DnaA-oriC complex binds and stabilizes one strand of the AT-rich DNA unwinding element (DUE), permitting loading of DNA polymerase. After initiation quickly degrades to an ADP-DnaA complex that is not apt for DNA replication. Binds acidic phospholipids. Functionally, binds to the bpuR promoter, possibly at 5'-TTTTTAAA-3'. The sequence is that of Chromosomal replication initiator protein DnaA from Borreliella burgdorferi (strain ATCC 35210 / DSM 4680 / CIP 102532 / B31) (Borrelia burgdorferi).